The following is a 452-amino-acid chain: Ribosomal L1 domain-containing protein 1 (452 aa).

Methionine 1 is modified (N-acetylmethionine). Glycyl lysine isopeptide (Lys-Gly) (interchain with G-Cter in SUMO2) cross-links involve residues lysine 119 and lysine 253. Residues 277-350 (LRSLRKQELK…QKVTEECEEA (74 aa)) adopt a coiled-coil conformation. The interval 283-452 (QELKKRKREN…DKKTKAAHSN (170 aa)) is disordered. Positions 292–301 (NAKLKKESKM) are enriched in basic and acidic residues. The segment covering 309–319 (ATSLLTQSGLA) has biased composition (polar residues). The segment covering 330–341 (QKKKTNKAHKKQ) has biased composition (basic residues). Phosphothreonine occurs at positions 334, 344, 360, 399, and 407. Basic and acidic residues predominate over residues 414-423 (KDVQEFRKPE). Positions 425-440 (SSFSTPRKSGKKASNT) are enriched in polar residues. Threonine 429 is modified (phosphothreonine). Lysine 432 is modified (N6-acetyllysine). Serine 433 bears the Phosphoserine mark.

The protein belongs to the universal ribosomal protein uL1 family. Highly divergent. In terms of assembly, interacts with ING1. Interacts with KPNA7 and KPNA2.

The protein localises to the nucleus. It is found in the nucleolus. In terms of biological role, regulates cellular senescence through inhibition of PTEN translation. Acts as a pro-apoptotic regulator in response to DNA damage. The protein is Ribosomal L1 domain-containing protein 1 of Mus musculus (Mouse).